We begin with the raw amino-acid sequence, 439 residues long: Chaperone SurA (439 aa).

The first 27 residues, 1 to 27 (MRRISSRLSLVLFAALSCATALFPAHA), serve as a signal peptide directing secretion. 2 PpiC domains span residues 180 to 281 (GEEF…KLLD) and 293 to 391 (LEQT…QVEA).

It is found in the periplasm. It carries out the reaction [protein]-peptidylproline (omega=180) = [protein]-peptidylproline (omega=0). Functionally, chaperone involved in the correct folding and assembly of outer membrane proteins. Recognizes specific patterns of aromatic residues and the orientation of their side chains, which are found more frequently in integral outer membrane proteins. May act in both early periplasmic and late outer membrane-associated steps of protein maturation. The sequence is that of Chaperone SurA from Aromatoleum aromaticum (strain DSM 19018 / LMG 30748 / EbN1) (Azoarcus sp. (strain EbN1)).